Consider the following 417-residue polypeptide: Voltage-gated ClC-type chloride channel ClcB (417 aa).

The next 11 helical transmembrane spans lie at 5–25 (LLIATIIGILAALAVAGFRHA), 54–74 (LITPAVGGLAAGALLWGWQKM), 146–166 (LWIACGAAAGMASAYHAPLAG), 168–188 (LFIAEILFGTLMLASLGPVVI), 190–210 (AVVALLTTHLLSGGNALLYTV), 222–242 (AMIISTGLVAGVCGPLFMWLM), 258–278 (WQLALGGFIVGLLSLLTPAVW), 288–308 (FLLSPPLLSVIAGIFICKLLA), 316–336 (GAPGGVFTPTLFIGLSIGMLY), 339–359 (MWGFWLPGADEMAILLGLTGM), and 380–400 (MTGEYRLLPGLLIACVVASVL).

The protein belongs to the chloride channel (TC 2.A.49) family. ClcB subfamily.

The protein localises to the cell inner membrane. Probably acts as an electrical shunt for an outwardly-directed proton pump that is linked to amino acid decarboxylation, as part of the extreme acid resistance (XAR) response. The polypeptide is Voltage-gated ClC-type chloride channel ClcB (Citrobacter koseri (strain ATCC BAA-895 / CDC 4225-83 / SGSC4696)).